The following is a 139-amino-acid chain: CLAVATA3/ESR (CLE)-related protein 1 (139 aa).

An N-terminal signal peptide occupies residues 1-22 (MPNIFKILLIVLLAVVSFRLSA). Positions 23–90 (STGDKKTAND…VPSHLTNRSM (68 aa)) are required for secretion from the host cytoplasm to the host apoplasm. Residues asparagine 37 and asparagine 87 are each glycosylated (N-linked (GlcNAc...) asparagine). Residues 66-139 (AIGRSNAQGG…SPSGPDPHHH (74 aa)) form a disordered region. Positions 100–125 (EKGAATRVEKMRAQLRELAEKMTDKD) form a coiled coil. Basic and acidic residues predominate over residues 106 to 128 (RVEKMRAQLRELAEKMTDKDPKR). Residues 128–139 (RLSPSGPDPHHH) carry the CLE motif.

The protein belongs to the CLV3/ESR signal peptide family. As to expression, highly expressed exclusively within the dorsal esophageal gland cell during syncytium formation in host plants (at protein level).

The protein localises to the secreted. It is found in the host cytoplasm. Its subcellular location is the host extracellular space. The protein resides in the extracellular space. It localises to the apoplast. In terms of biological role, mimics host plant CLE extracellular signal peptides that regulate cell fate. May play a role in the differentiation or division of feeding cells (syncytia) induced in plant roots during infection. In Heterodera glycines (Soybean cyst nematode worm), this protein is CLAVATA3/ESR (CLE)-related protein 1 (CLE1).